Reading from the N-terminus, the 191-residue chain is Signal peptidase complex catalytic subunit sec11 (191 aa).

Topologically, residues Met-1 to Gln-18 are cytoplasmic. Residues Val-19–Ala-39 traverse the membrane as a helical; Signal-anchor for type II membrane protein segment. At Ser-40 to Glu-191 the chain is on the lumenal side. Residue Asn-41 is glycosylated (N-linked (GlcNAc...) asparagine). Residues Ser-53, His-92, and Asp-133 each act as charge relay system in the active site. The tract at residues Val-177–Leu-188 is C-terminal short (CTS) helix.

This sequence belongs to the peptidase S26B family. As to quaternary structure, component of the signal peptidase complex (SPC) composed of a catalytic subunit SEC11 and three accessory subunits SPC1, SPC2 and SPC3. The complex induces a local thinning of the ER membrane which is used to measure the length of the signal peptide (SP) h-region of protein substrates. This ensures the selectivity of the complex towards h-regions shorter than 18-20 amino acids. SPC associates with the translocon complex.

The protein localises to the endoplasmic reticulum membrane. The catalysed reaction is Cleavage of hydrophobic, N-terminal signal or leader sequences from secreted and periplasmic proteins.. Its function is as follows. Catalytic component of the signal peptidase complex (SPC) which catalyzes the cleavage of N-terminal signal sequences from nascent proteins as they are translocated into the lumen of the endoplasmic reticulum. Specifically cleaves N-terminal signal peptides that contain a hydrophobic alpha-helix (h-region) shorter than 18-20 amino acids. The sequence is that of Signal peptidase complex catalytic subunit sec11 (sec11) from Talaromyces marneffei (strain ATCC 18224 / CBS 334.59 / QM 7333) (Penicillium marneffei).